A 316-amino-acid polypeptide reads, in one-letter code: ATP synthase gamma chain (316 aa).

This sequence belongs to the ATPase gamma chain family. F-type ATPases have 2 components, CF(1) - the catalytic core - and CF(0) - the membrane proton channel. CF(1) has five subunits: alpha(3), beta(3), gamma(1), delta(1), epsilon(1). CF(0) has three main subunits: a, b and c.

The protein localises to the cellular thylakoid membrane. In terms of biological role, produces ATP from ADP in the presence of a proton gradient across the membrane. The gamma chain is believed to be important in regulating ATPase activity and the flow of protons through the CF(0) complex. The polypeptide is ATP synthase gamma chain (Prochlorococcus marinus (strain MIT 9313)).